Consider the following 453-residue polypeptide: Ribosomal protein uS12 methylthiotransferase RimO (453 aa).

The MTTase N-terminal domain occupies 5-120 (PKVGFVSLGC…VMQAVHSHLP (116 aa)). Residues Cys14, Cys50, Cys79, Cys151, Cys155, and Cys158 each coordinate [4Fe-4S] cluster. One can recognise a Radical SAM core domain in the interval 137 to 382 (LTPRHYAYLK…MEVAEEVSAR (246 aa)). The TRAM domain maps to 385 to 453 (ARKVGKTLKV…ADGHDLWGEV (69 aa)).

The protein belongs to the methylthiotransferase family. RimO subfamily. The cofactor is [4Fe-4S] cluster.

It is found in the cytoplasm. The catalysed reaction is L-aspartate(89)-[ribosomal protein uS12]-hydrogen + (sulfur carrier)-SH + AH2 + 2 S-adenosyl-L-methionine = 3-methylsulfanyl-L-aspartate(89)-[ribosomal protein uS12]-hydrogen + (sulfur carrier)-H + 5'-deoxyadenosine + L-methionine + A + S-adenosyl-L-homocysteine + 2 H(+). Its function is as follows. Catalyzes the methylthiolation of an aspartic acid residue of ribosomal protein uS12. This chain is Ribosomal protein uS12 methylthiotransferase RimO, found in Burkholderia multivorans (strain ATCC 17616 / 249).